The following is a 304-amino-acid chain: Ribonuclease Z (304 aa).

7 residues coordinate Zn(2+): histidine 64, histidine 66, aspartate 68, histidine 69, histidine 141, aspartate 209, and histidine 267. The Proton acceptor role is filled by aspartate 68.

It belongs to the RNase Z family. In terms of assembly, homodimer. Zn(2+) serves as cofactor.

The enzyme catalyses Endonucleolytic cleavage of RNA, removing extra 3' nucleotides from tRNA precursor, generating 3' termini of tRNAs. A 3'-hydroxy group is left at the tRNA terminus and a 5'-phosphoryl group is left at the trailer molecule.. Zinc phosphodiesterase, which displays some tRNA 3'-processing endonuclease activity. Probably involved in tRNA maturation, by removing a 3'-trailer from precursor tRNA. This Thermoplasma volcanium (strain ATCC 51530 / DSM 4299 / JCM 9571 / NBRC 15438 / GSS1) protein is Ribonuclease Z.